Here is a 588-residue protein sequence, read N- to C-terminus: Sentrin-specific protease 2 (588 aa).

The short motif at 28-31 is the Nuclear localization signal element; sequence KRRR. Residue Ser32 is modified to Phosphoserine. The short motif at 47 to 52 is the Nuclear localization signal element; it reads PAKRPR. The tract at residues 72–381 is axin-binding; that stretch reads GFPFQLTTKP…EKEISNALGH (310 aa). The interval 157–184 is disordered; that stretch reads EGYNRRPSGRRHSKSNPESSLPWKPQEQ. The Nuclear export signal signature appears at 316–331; it reads LEPDLSEEVSARLRLG. Residues Ser332 and Ser343 each carry the phosphoserine modification. The segment at 394–558 is protease; the sequence is LRITRGDIQT…MFTCKYADYI (165 aa). Residues His477 and Asp494 contribute to the active site. The Nucleophile role is filled by Cys547.

The protein belongs to the peptidase C48 family. In terms of assembly, binds to SUMO2 and SUMO3. Interacts with the C-terminal domain of NUP153 via its N-terminus. Interacts with MTA1. Binds to AXIN1. In terms of processing, polyubiquitinated; which leads to proteasomal degradation. Ubiquitous. Highly expressed in brain, lung and testis.

It is found in the nucleus. Its subcellular location is the nuclear pore complex. It localises to the nucleus membrane. The protein resides in the cytoplasm. Its function is as follows. Protease that catalyzes two essential functions in the SUMO pathway. The first is the hydrolysis of an alpha-linked peptide bond at the C-terminal end of the small ubiquitin-like modifier (SUMO) propeptides, SUMO1, SUMO2 and SUMO3 leading to the mature form of the proteins. The second is the deconjugation of SUMO1, SUMO2 and SUMO3 from targeted proteins, by cleaving an epsilon-linked peptide bond between the C-terminal glycine of the mature SUMO and the lysine epsilon-amino group of the target protein. May down-regulate CTNNB1 levels and thereby modulate the Wnt pathway. Deconjugates SUMO2 from MTA1. Plays a dynamic role in adipogenesis by desumoylating and promoting the stabilization of CEBPB. Acts as a regulator of the cGAS-STING pathway by catalyzing desumoylation of CGAS and STING1 during the late phase of viral infection. The polypeptide is Sentrin-specific protease 2 (Senp2) (Rattus norvegicus (Rat)).